We begin with the raw amino-acid sequence, 475 residues long: Ankyrin repeat, SAM and basic leucine zipper domain-containing protein 1 (475 aa).

Residues 1-24 (MAGSLGNLVVAGGGESSDSEEDYW) are disordered. Ser16, Ser17, and Ser19 each carry phosphoserine. 6 ANK repeats span residues 44 to 73 (ERDE…SVES), 77 to 106 (FGWT…NASF), 109 to 146 (DQYT…VACR), 147 to 176 (KCMT…EINA), 180 to 209 (NGYT…NKTI), and 213 to 242 (DGKT…PLQG). An SAM domain is found at 273-336 (TAFGDLEVFL…LDAVKELQVE (64 aa)).

As to quaternary structure, interacts with DDX4, PIWIL1, RANBP9 and TDRD1.

Its subcellular location is the cytoplasm. Its function is as follows. Plays a central role during spermatogenesis by repressing transposable elements and preventing their mobilization, which is essential for the germline integrity. Acts via the piRNA metabolic process, which mediates the repression of transposable elements during meiosis by forming complexes composed of piRNAs and Piwi proteins and governs the methylation and subsequent repression of transposons. Its association with pi-bodies suggests a participation in the primary piRNAs metabolic process. Required prior to the pachytene stage to facilitate the production of multiple types of piRNAs, including those associated with repeats involved in the regulation of retrotransposons. May act by mediating protein-protein interactions during germ cell maturation. This is Ankyrin repeat, SAM and basic leucine zipper domain-containing protein 1 (ASZ1) from Notamacropus eugenii (Tammar wallaby).